The chain runs to 85 residues: Acyl carrier protein (85 aa).

Residues 4-79 (DELFEKVKEI…NAVNLLSEKL (76 aa)) form the Carrier domain. Ser-39 is subject to O-(pantetheine 4'-phosphoryl)serine.

Belongs to the acyl carrier protein (ACP) family. In terms of processing, 4'-phosphopantetheine is transferred from CoA to a specific serine of apo-ACP by AcpS. This modification is essential for activity because fatty acids are bound in thioester linkage to the sulfhydryl of the prosthetic group.

The protein localises to the cytoplasm. It functions in the pathway lipid metabolism; fatty acid biosynthesis. Its function is as follows. Carrier of the growing fatty acid chain in fatty acid biosynthesis. The protein is Acyl carrier protein of Petrotoga mobilis (strain DSM 10674 / SJ95).